Reading from the N-terminus, the 66-residue chain is Myrmicitoxin(1)-Pr5a (66 aa).

The signal sequence occupies residues 1–25 (MRSLYLSFSLTIIFVLVIMHAEAKA). A propeptide spanning residues 26-37 (ISEPNAIAEADP) is cleaved from the precursor. A Valine amide modification is found at Val-65.

It belongs to the formicidae venom clade 3 family. As to expression, expressed by the venom gland.

It localises to the secreted. Functionally, toxin that causes a rapid and irreversible paralysis when intrathoracically injected into insects (blowflies). Does not cause spontaneous nocifensive behaviors by intraplantar injection in mice. Exhibits hemolytic and cytotoxic activities on HEK293 cells. The protein is Myrmicitoxin(1)-Pr5a of Pogonomyrmex rugosus (Desert harvester ant).